A 146-amino-acid polypeptide reads, in one-letter code: MKLHELQPAPGSRKKAVRVGRGIGSGNGKTSGRGQKGQNARSGGGVRLGFEGGQTPLFRRLPKRGFTNINRKEYAVVNLEKLNRFEDGTEVTPELLLETGVISKLKSGVKILGKGQIEKKLTVKAHKFSASAKEAIEAAGGKTEVI.

The segment at 1–51 is disordered; it reads MKLHELQPAPGSRKKAVRVGRGIGSGNGKTSGRGQKGQNARSGGGVRLGFE. Composition is skewed to gly residues over residues 21–35 and 42–51; these read RGIG…GRGQ and SGGGVRLGFE.

It belongs to the universal ribosomal protein uL15 family. In terms of assembly, part of the 50S ribosomal subunit.

In terms of biological role, binds to the 23S rRNA. This Geobacillus kaustophilus (strain HTA426) protein is Large ribosomal subunit protein uL15.